Here is a 328-residue protein sequence, read N- to C-terminus: m7GpppN-mRNA hydrolase NUDT17 (328 aa).

One can recognise a Nudix hydrolase domain in the interval 90–236; it reads GVDLGVAVIL…DGTETPGLLP (147 aa). The Nudix box motif lies at 127 to 148; sequence GHVELEEELLDGGLRELWEESG. Residues Glu142 and Glu146 each coordinate Mg(2+). Residues 299 to 328 form a disordered region; it reads PCKSAAYLDPGPAKEEWNMDPLPPNQGSGK.

This sequence belongs to the Nudix hydrolase family. Mg(2+) serves as cofactor. It depends on Mn(2+) as a cofactor.

It catalyses the reaction a 5'-end (N(7)-methyl 5'-triphosphoguanosine)-ribonucleoside in mRNA + H2O = N(7)-methyl-GDP + a 5'-end phospho-ribonucleoside in mRNA + 2 H(+). Its function is as follows. Acts as a decapping enzyme capable of hydrolyzing monomethylated capped RNAs (in vitro). Hydrolyzes monomethylated capped RNA after alpha and beta phosphates to form N(7)-methyl-GDP. Shows low activity towards unmethylated capped RNA. This chain is m7GpppN-mRNA hydrolase NUDT17 (NUDT17), found in Homo sapiens (Human).